A 338-amino-acid polypeptide reads, in one-letter code: D-erythrose-4-phosphate dehydrogenase (338 aa).

12 to 13 (RI) is an NAD(+) binding site. Residues 154 to 156 (SCT), R200, 213 to 214 (TK), and R236 contribute to the substrate site. The active-site Nucleophile is the C155. Residue N318 participates in NAD(+) binding.

Belongs to the glyceraldehyde-3-phosphate dehydrogenase family. Epd subfamily. Homotetramer.

Its subcellular location is the cytoplasm. It carries out the reaction D-erythrose 4-phosphate + NAD(+) + H2O = 4-phospho-D-erythronate + NADH + 2 H(+). Its pathway is cofactor biosynthesis; pyridoxine 5'-phosphate biosynthesis; pyridoxine 5'-phosphate from D-erythrose 4-phosphate: step 1/5. Its function is as follows. Catalyzes the NAD-dependent conversion of D-erythrose 4-phosphate to 4-phosphoerythronate. The protein is D-erythrose-4-phosphate dehydrogenase of Yersinia pestis bv. Antiqua (strain Antiqua).